A 502-amino-acid chain; its full sequence is Glucose-6-phosphate isomerase (502 aa).

Glu331 serves as the catalytic Proton donor. Catalysis depends on residues His362 and Lys471.

This sequence belongs to the GPI family.

The protein resides in the cytoplasm. It catalyses the reaction alpha-D-glucose 6-phosphate = beta-D-fructose 6-phosphate. The protein operates within carbohydrate biosynthesis; gluconeogenesis. It participates in carbohydrate degradation; glycolysis; D-glyceraldehyde 3-phosphate and glycerone phosphate from D-glucose: step 2/4. In terms of biological role, catalyzes the reversible isomerization of glucose-6-phosphate to fructose-6-phosphate. In Xylella fastidiosa (strain 9a5c), this protein is Glucose-6-phosphate isomerase.